Reading from the N-terminus, the 659-residue chain is UvrABC system protein B (659 aa).

Residues 25–414 enclose the Helicase ATP-binding domain; sequence EGVRRGAREQ…PSLVVEQIVR (390 aa). 38–45 is a binding site for ATP; sequence GATGTGKT. Residues 91–114 carry the Beta-hairpin motif; the sequence is YYDYYQPEAYIPTTDTYIEKDALI. A Helicase C-terminal domain is found at 431-597; it reads QIDDLYAEIR…TIVKPVRDVI (167 aa). The UVR domain maps to 620–655; the sequence is PKVVAKLRKEMMQAAKDLDFERAAEIRDIIFELEKK.

This sequence belongs to the UvrB family. As to quaternary structure, forms a heterotetramer with UvrA during the search for lesions. Interacts with UvrC in an incision complex.

The protein resides in the cytoplasm. The UvrABC repair system catalyzes the recognition and processing of DNA lesions. A damage recognition complex composed of 2 UvrA and 2 UvrB subunits scans DNA for abnormalities. Upon binding of the UvrA(2)B(2) complex to a putative damaged site, the DNA wraps around one UvrB monomer. DNA wrap is dependent on ATP binding by UvrB and probably causes local melting of the DNA helix, facilitating insertion of UvrB beta-hairpin between the DNA strands. Then UvrB probes one DNA strand for the presence of a lesion. If a lesion is found the UvrA subunits dissociate and the UvrB-DNA preincision complex is formed. This complex is subsequently bound by UvrC and the second UvrB is released. If no lesion is found, the DNA wraps around the other UvrB subunit that will check the other stand for damage. This Symbiobacterium thermophilum (strain DSM 24528 / JCM 14929 / IAM 14863 / T) protein is UvrABC system protein B.